The primary structure comprises 344 residues: Cyclin-G2 (344 aa).

Acidic residues predominate over residues 301-313; sequence ESESEDSCEDMSC. The interval 301-320 is disordered; it reads ESESEDSCEDMSCGEESLSS.

This sequence belongs to the cyclin family. Cyclin G subfamily. High levels in cerebellum, thymus, spleen and prostate. Low levels in skeletal muscle.

It localises to the cytoplasm. May play a role in growth regulation and in negative regulation of cell cycle progression. The sequence is that of Cyclin-G2 (CCNG2) from Homo sapiens (Human).